A 503-amino-acid chain; its full sequence is Probable dolichyl pyrophosphate Man9GlcNAc2 alpha-1,3-glucosyltransferase (503 aa).

Residues 1-46 (MKERIKDKAWRPQFIKLNNPDTSKKIVSQKSKKPEIVDLSSPGNND) lie on the Cytoplasmic side of the membrane. A helical transmembrane segment spans residues 47–67 (LVTISILCVLLCFQLAISLNP). Residues 68 to 151 (HSGESQPPMY…SRGYESIAHK (84 aa)) are Lumenal-facing. Residues 152–172 (LFMRLSAIIPFYIFYLPPLIF) form a helical membrane-spanning segment. The Cytoplasmic segment spans residues 173–181 (YFTRSKKMS). The helical transmembrane segment at 182 to 202 (PILYALALLYPSLLVIDNGHF) threads the bilayer. Topologically, residues 203–211 (QYNSISLGL) are lumenal. Residues 212–232 (FLATYMFLTKNFTIIGSILFV) form a helical membrane-spanning segment. Over 233–239 (AALNYKQ) the chain is Cytoplasmic. Residues 240–257 (MELYHALPVFVFILARSI) form a helical membrane-spanning segment. At 258 to 268 (NKTQLFNSFRR) the chain is on the lumenal side. The chain crosses the membrane as a helical span at residues 269-289 (ILTIGLFVVGTFLIIWLPFLL). Residues 290 to 332 (TGTAKDVIIRVFPFNRGLYEDKVASFWCAFSFILKRLPLQSVQ) are Cytoplasmic-facing. A helical membrane pass occupies residues 333–353 (IYISTALVLAGSAPSLLVLFL). The Lumenal segment spans residues 354-359 (RPTEKQ). Residues 360–379 (FRISLTATGLSFFLFSFHVH) traverse the membrane as a helical segment. At 380–382 (EKT) the chain is on the cytoplasmic side. A helical transmembrane segment spans residues 383-403 (ILLAAVPALLLISEYTSLVIW). Residues 404–420 (FLNITNISIFSLCVKDN) lie on the Lumenal side of the membrane. The chain crosses the membrane as a helical span at residues 421–441 (FALSLSFFFAYFVVSYAYTAP). Residues 442–443 (RK) lie on the Cytoplasmic side of the membrane. The helical transmembrane segment at 444 to 464 (ISHILTILIGFAICILELYGP) threads the bilayer. The Lumenal segment spans residues 465–474 (SNQRFPHIYQ). A helical transmembrane segment spans residues 475–495 (LANAFFSCVHFIYFLLYLSFA). Over 496–503 (SFEKTKKE) the chain is Cytoplasmic.

This sequence belongs to the ALG6/ALG8 glucosyltransferase family.

Its subcellular location is the endoplasmic reticulum membrane. It carries out the reaction an alpha-D-Man-(1-&gt;2)-alpha-D-Man-(1-&gt;2)-alpha-D-Man-(1-&gt;3)-[alpha-D-Man-(1-&gt;2)-alpha-D-Man-(1-&gt;3)-[alpha-D-Man-(1-&gt;2)-alpha-D-Man-(1-&gt;6)]-alpha-D-Man-(1-&gt;6)]-beta-D-Man-(1-&gt;4)-beta-D-GlcNAc-(1-&gt;4)-alpha-D-GlcNAc-diphospho-di-trans,poly-cis-dolichol + a di-trans,poly-cis-dolichyl beta-D-glucosyl phosphate = an alpha-D-Glc-(1-&gt;3)-alpha-D-Man-(1-&gt;2)-alpha-D-Man-(1-&gt;2)-alpha-D-Man-(1-&gt;3)-[alpha-D-Man-(1-&gt;2)-alpha-D-Man-(1-&gt;3)-[alpha-D-Man-(1-&gt;2)-alpha-D-Man-(1-&gt;6)]-alpha-D-Man-(1-&gt;6)]-beta-D-Man-(1-&gt;4)-beta-D-GlcNAc-(1-&gt;4)-alpha-D-GlcNAc-diphospho-di-trans,poly-cis-dolichol + a di-trans,poly-cis-dolichyl phosphate + H(+). Its pathway is protein modification; protein glycosylation. Its function is as follows. Adds the first glucose residue to the lipid-linked oligosaccharide precursor for N-linked glycosylation. Transfers glucose from dolichyl phosphate glucose (Dol-P-Glc) onto the lipid-linked oligosaccharide Man(9)GlcNAc(2)-PP-Dol. The protein is Probable dolichyl pyrophosphate Man9GlcNAc2 alpha-1,3-glucosyltransferase of Caenorhabditis elegans.